Reading from the N-terminus, the 673-residue chain is Vasorin (673 aa).

Positions 1 to 24 are cleaved as a signal peptide; that stretch reads MHSRSCLPPLLLLLLVLLGSGVQG. Residues 25–53 enclose the LRRNT domain; sequence CPSGCQCNQPQTVFCTARQGTTVPRDVPP. The Extracellular segment spans residues 25 to 576; it reads CPSGCQCNQP…VTQAREGNLP (552 aa). 10 LRR repeats span residues 54-75, 78-99, 102-123, 126-147, 150-170, 171-192, 194-215, 218-239, 241-265, and 266-288; these read DTVGLYIFENGITTLDVGCFAG, GLQLLDLSQNQITSLPGGIFQP, NLSNLDLTANKLHEISNETFRG, RLERLYLGKNRIRHIQPGAFDA, RLLELKLPDNELRVLPPLHLP, RLLLLDLSHNSIPALEAGILDT, NVEALRLAGLGLRQLDEGLFGR, NLHDLDVSDNQLEHMPSVIQGL, GLTRLRLAGNTRIAQIRPEDLAGLT, and ALQELDVSNLSLQALPSDLSSLF. 2 N-linked (GlcNAc...) asparagine glycosylation sites follow: Asn-102 and Asn-118. The N-linked (GlcNAc...) asparagine glycan is linked to Asn-274. The LRRCT domain maps to 299-352; it reads NPFNCLCPLSWFGPWVRENHVVLASPEETRCHFPPKNAGRLLLDLDYADFGCPV. The segment at 369–389 is disordered; sequence PTLSTSSQAPTWPSLTEPTTQ. Over residues 370 to 389 the composition is skewed to polar residues; that stretch reads TLSTSSQAPTWPSLTEPTTQ. The region spanning 406 to 443 is the EGF-like domain; that stretch reads QPQDCPASICLNGGSCRLGARHHWECLCPEGFIGLYCE. Disulfide bonds link Cys-410–Cys-421, Cys-415–Cys-431, and Cys-433–Cys-442. The Fibronectin type-III domain maps to 463–559; that stretch reads PLLPLSIEPV…ACGEANTSQA (97 aa). 3 N-linked (GlcNAc...) asparagine glycosylation sites follow: Asn-501, Asn-529, and Asn-555. The helical transmembrane segment at 577–597 threads the bilayer; sequence LLIAPALAAVLLAVLAAAGAA. Topologically, residues 598-673 are cytoplasmic; it reads YCVRRARATS…QGVLPAKHYI (76 aa). The segment at 608–648 is disordered; that stretch reads TAQDKGQVGPGTGPLELEGVKAPLEPGSKATEGGGEALSGG.

Interacts with TGFB1, TGFB2 and TGFB3. N-glycosylated.

It is found in the membrane. In terms of biological role, may act as an inhibitor of TGF-beta signaling. This chain is Vasorin (Vasn), found in Mus musculus (Mouse).